Consider the following 146-residue polypeptide: Hemoglobin cathodic subunit beta (146 aa).

Positions 2–146 (QWSSSERSTI…VVSALSRQYF (145 aa)) constitute a Globin domain. Residues histidine 63 and histidine 92 each coordinate heme b.

This sequence belongs to the globin family. As to quaternary structure, heterotetramer of two alpha chains and two beta chains. Red blood cells.

Involved in oxygen transport from the gills to the various peripheral tissues. The polypeptide is Hemoglobin cathodic subunit beta (Conger conger (Conger eel)).